The primary structure comprises 848 residues: Dolabradiene synthase KSL4, chloroplastic (848 aa).

The transit peptide at 1–64 (MASLSFASSH…SRMPRNVDTH (64 aa)) directs the protein to the chloroplast. Positions 148–168 (QRSDGSWGPDGGSGDHPSSPL) are disordered. Positions 597, 601, 742, 746, and 750 each coordinate Mg(2+). Residues 597 to 601 (DDLFD) carry the DDXXD motif motif.

This sequence belongs to the terpene synthase family. It depends on Mg(2+) as a cofactor.

It localises to the plastid. The protein resides in the chloroplast. It catalyses the reaction ent-copalyl diphosphate = dolabradiene + diphosphate. In terms of biological role, involved in the production of antifungal dolabralexin phytoalexins in response to biotic and abiotic stresses. In response to fungal infection and in associtation with AN2, is involved in the production dolabradiene, a type of antifungal phytoalexin. Converts ent-copalyl disphosphate (ent-CPP) to dolabradiene. The polypeptide is Dolabradiene synthase KSL4, chloroplastic (Zea mays (Maize)).